A 386-amino-acid polypeptide reads, in one-letter code: ATP phosphoribosyltransferase regulatory subunit (386 aa).

The protein belongs to the class-II aminoacyl-tRNA synthetase family. HisZ subfamily. As to quaternary structure, heteromultimer composed of HisG and HisZ subunits.

It is found in the cytoplasm. It participates in amino-acid biosynthesis; L-histidine biosynthesis; L-histidine from 5-phospho-alpha-D-ribose 1-diphosphate: step 1/9. Functionally, required for the first step of histidine biosynthesis. May allow the feedback regulation of ATP phosphoribosyltransferase activity by histidine. The protein is ATP phosphoribosyltransferase regulatory subunit of Ralstonia nicotianae (strain ATCC BAA-1114 / GMI1000) (Ralstonia solanacearum).